The chain runs to 421 residues: E3 ubiquitin protein ligase DRIP1 (421 aa).

The RING-type zinc-finger motif lies at 16–57; sequence CSICDNILRDATTISECLHTFCRKCIYEKITEDEIETCPVCN. Polar residues-rich tracts occupy residues 106–121 and 157–172; these read ISSL…AQAG and ESTS…TQNK. Disordered stretches follow at residues 106–198 and 216–307; these read ISSL…WDSK and PLKS…QERR. Residues 178–198 are compositionally biased toward basic and acidic residues; sequence SCKESISNKENKDGDEPWDSK. Positions 218 to 227 are enriched in low complexity; the sequence is KSSASQGSGS. Residues 244–253 are compositionally biased toward basic residues; that stretch reads TKTKNKKRKC. Polar residues predominate over residues 262–271; that stretch reads NGDPTTSETV. Residues 274 to 284 are compositionally biased toward basic residues; that stretch reads KRMRTTQRKRS. A compositionally biased stretch (polar residues) spans 285 to 294; sequence ATTLGDSRNL.

Interacts with DREB2A. In terms of processing, autoubiquitinated. Expressed in roots, leaves and flowers.

The protein localises to the nucleus. The enzyme catalyses S-ubiquitinyl-[E2 ubiquitin-conjugating enzyme]-L-cysteine + [acceptor protein]-L-lysine = [E2 ubiquitin-conjugating enzyme]-L-cysteine + N(6)-ubiquitinyl-[acceptor protein]-L-lysine.. It participates in protein modification; protein ubiquitination. E3 ubiquitin-protein ligase that acts as a negative regulator of the response to water stress. Mediates ubiquitination and subsequent proteasomal degradation of the drought-induced transcriptional activator DREB2A. Functionally redundant with DRIP2. This is E3 ubiquitin protein ligase DRIP1 (DRIP1) from Arabidopsis thaliana (Mouse-ear cress).